The chain runs to 211 residues: Ribosomal RNA small subunit methyltransferase G (211 aa).

S-adenosyl-L-methionine-binding positions include Gly81, Leu86, 132–133, and Arg147; that span reads AE.

It belongs to the methyltransferase superfamily. RNA methyltransferase RsmG family.

The protein localises to the cytoplasm. It carries out the reaction guanosine(527) in 16S rRNA + S-adenosyl-L-methionine = N(7)-methylguanosine(527) in 16S rRNA + S-adenosyl-L-homocysteine. Specifically methylates the N7 position of guanine in position 527 of 16S rRNA. The protein is Ribosomal RNA small subunit methyltransferase G of Dichelobacter nodosus (strain VCS1703A).